The sequence spans 255 residues: Zinc finger CCCH domain-containing protein 37 (255 aa).

2 consecutive C3H1-type zinc fingers follow at residues 98 to 128 (AYTGEPCPDFRRRPGAACPRGSTCPFAHGTF) and 137 to 159 (YRTRPCRAGVACRRRVCFFAHTA).

The sequence is that of Zinc finger CCCH domain-containing protein 37 from Oryza sativa subsp. japonica (Rice).